A 234-amino-acid chain; its full sequence is Probable glycerol uptake facilitator protein (234 aa).

2 consecutive transmembrane segments (helical) span residues Val-3 to Ala-23 and Gly-36 to Gly-56. The short motif at Asn-64–Ala-66 is the NPA 1 element. The next 3 helical transmembrane spans lie at Val-82–Leu-102, Leu-134–Asn-154, and Leu-164–Ile-184. The NPA 2 motif lies at Asn-185–Ala-187. The helical transmembrane segment at Val-214–Phe-234 threads the bilayer.

It belongs to the MIP/aquaporin (TC 1.A.8) family.

The protein localises to the cell membrane. The catalysed reaction is glycerol(in) = glycerol(out). In terms of biological role, mediates glycerol diffusion across the cytoplasmic membrane via a pore-type mechanism. The sequence is that of Probable glycerol uptake facilitator protein (glpF) from Thermotoga maritima (strain ATCC 43589 / DSM 3109 / JCM 10099 / NBRC 100826 / MSB8).